The sequence spans 664 residues: Xyloglucan-specific galacturonosyltransferase 1 (664 aa).

Residues 1–21 (MSLSKHLQKLVHKRESKKQPN) show a composition bias toward basic residues. The disordered stretch occupies residues 1-49 (MSLSKHLQKLVHKRESKKQPNKKMPVSVSKLRRPRTSKKTETGNPEKTL). Residues 1–71 (MSLSKHLQKL…IFSARSFLYR (71 aa)) lie on the Cytoplasmic side of the membrane. Residues 72–92 (VPLTILFLFLIYLWSTSTTVI) form a helical; Signal-anchor for type II membrane protein membrane-spanning segment. The Lumenal segment spans residues 93 to 664 (SGNVVHICIS…SLFKKIAKTV (572 aa)). N-linked (GlcNAc...) asparagine glycans are attached at residues Asn-126, Asn-158, Asn-175, Asn-181, Asn-355, Asn-379, and Asn-522.

This sequence belongs to the glycosyltransferase 47 family. As to expression, root hair specific. Expressed in roots and young leaves.

Its subcellular location is the golgi apparatus membrane. Functionally, xyloglucan-specific galacturonosyltransferase that forms the beta-D-galactosyluronic acid-(1-&gt;2)-alpha-D-xylosyl linkage. Required for root hair development probably by providing important acidic xyloglucans. The protein is Xyloglucan-specific galacturonosyltransferase 1 of Arabidopsis thaliana (Mouse-ear cress).